The sequence spans 874 residues: MQPTNPNQFTEKAWEAIVRTTDVAKQAQHQQIESEHLFLALLQEPGLALNILKKAGLEAAQLQQFTERFIARQPKVSGGNQSVYLGRSLDQLLDQADQFRKDFGDEFISVEHLILSFPRDSRFGRLLSQEFKVDEKQLRQIIQQIRGSQKVTDQNPEGKYEALEKYGRDLTEMARRGKLDPVIGRDDEIRRTIQILSRRTKNNPVLIGEPGVGKTAIAEGLAQRIINGDVPQSLKDRRLIALDMGALIAGAKFRGEFEERLKAVLKEVTDSEGIIILFIDEIHTVVGAGAVQGSMDAGNLLKPMLARGELRCIGATTLDEYRQYIEKDAALERRFQQVFVDQPTVEDTISILRGLKERYEVHHGVRISDNALVAAAVLSTRYISDRFLPDKAIDLVDESAARLKMEITSKPEELDEIDRKILQLEMERLSLQKESDLASQERLQRLEKELADLKEEQRSLSSQWQAEKDVITDIQSVKEEIDQVNLLIQQAERDYDLNKAAELKYGKLTELQRKLNEMEGGLATTHTSGKSLLREEVTEVDIAEIISKWTGIPVSKLVESEMQKLLNLDEELHQRVIGQEEAVSAVADAIQRSRAGLSDPKRPIASFIFLGPTGVGKTELAKALAAYLFDTEDAMIRIDMSEYMEKHAVSRLIGAPPGYVGYDEGGQLTEAVRRRPYSVILFDEIEKAHPDVFNVMLQILDDGRVTDSRGRTVDFKNTILILTSNIGSQYILDVAGDDSRYEEMRSRVTEALRANFRPEFLNRVDETIIFHSLRKDQLQQIVRIQLHRLEERLSDRKLSLSMSPEAIDFLVEIGFDPVYGARPLKRVIQRELETAIAKAILRGQFSDGDTIQVAVENERLVFKAIATPTAVPLS.

The region spanning 6–148 is the Clp R domain; sequence PNQFTEKAWE…RQIIQQIRGS (143 aa). 2 repeat regions span residues 9-73 and 85-148; these read FTEK…IARQ and LGRS…IRGS. The NBD1 stretch occupies residues 161–342; that stretch reads EALEKYGRDL…RRFQQVFVDQ (182 aa). 208 to 215 provides a ligand contact to ATP; the sequence is GEPGVGKT. The tract at residues 343-551 is linker; the sequence is PTVEDTISIL…IAEIISKWTG (209 aa). A coiled-coil region spans residues 393–527; it reads IDLVDESAAR…MEGGLATTHT (135 aa). Residues 561–772 form an NBD2 region; that stretch reads EMQKLLNLDE…RVDETIIFHS (212 aa). 611-618 serves as a coordination point for ATP; the sequence is GPTGVGKT. The C-terminal stretch occupies residues 773–874; it reads LRKDQLQQIV…IATPTAVPLS (102 aa).

It belongs to the ClpA/ClpB family. Homohexamer. The oligomerization is ATP-dependent.

The protein localises to the cytoplasm. Its function is as follows. Part of a stress-induced multi-chaperone system, it is involved in the recovery of the cell from heat-induced damage, in cooperation with DnaK, DnaJ and GrpE. Acts before DnaK, in the processing of protein aggregates. Protein binding stimulates the ATPase activity; ATP hydrolysis unfolds the denatured protein aggregates, which probably helps expose new hydrophobic binding sites on the surface of ClpB-bound aggregates, contributing to the solubilization and refolding of denatured protein aggregates by DnaK. Necessary for thermotolerance. The polypeptide is Chaperone protein ClpB 1 (clpB1) (Synechococcus elongatus (strain ATCC 33912 / PCC 7942 / FACHB-805) (Anacystis nidulans R2)).